Reading from the N-terminus, the 340-residue chain is Thermopsin (340 aa).

Residues 1 to 28 (MNFKSICLIILLSALIIPYIPQNIYFFP) form the signal peptide. Residues 29–41 (HRNTTGATISSGL) constitute a propeptide that is removed on maturation. 10 N-linked (GlcNAc...) asparagine glycosylation sites follow: N31, N65, N85, N117, N148, N197, N277, N287, N327, and N334.

Belongs to the peptidase A5 family.

The protein resides in the secreted. The catalysed reaction is Specificity similar to pepsin A, prefers bulky hydrophobic side-chains on either side of the scissible bond.. May represent a new class of acid proteases. It digests proteins and peptides in acidic solution. This chain is Thermopsin (thpS), found in Sulfolobus acidocaldarius (strain ATCC 33909 / DSM 639 / JCM 8929 / NBRC 15157 / NCIMB 11770).